Consider the following 310-residue polypeptide: tRNA-cytidine(32) 2-sulfurtransferase (310 aa).

The PP-loop motif motif lies at 45–50 (SGGKDS). Positions 120, 123, and 211 each coordinate [4Fe-4S] cluster.

Belongs to the TtcA family. In terms of assembly, homodimer. The cofactor is Mg(2+). [4Fe-4S] cluster is required as a cofactor.

Its subcellular location is the cytoplasm. The catalysed reaction is cytidine(32) in tRNA + S-sulfanyl-L-cysteinyl-[cysteine desulfurase] + AH2 + ATP = 2-thiocytidine(32) in tRNA + L-cysteinyl-[cysteine desulfurase] + A + AMP + diphosphate + H(+). It functions in the pathway tRNA modification. Functionally, catalyzes the ATP-dependent 2-thiolation of cytidine in position 32 of tRNA, to form 2-thiocytidine (s(2)C32). The sulfur atoms are provided by the cysteine/cysteine desulfurase (IscS) system. The chain is tRNA-cytidine(32) 2-sulfurtransferase from Shewanella sp. (strain ANA-3).